Here is a 234-residue protein sequence, read N- to C-terminus: Small ribosomal subunit protein uS3 (234 aa).

One can recognise a KH type-2 domain in the interval 39–107 (VRDYLKKKLS…PVHVNIEEVR (69 aa)). Residues 212–234 (EQPAAAEQEKRGKKSGVKHAAAS) form a disordered region.

Belongs to the universal ribosomal protein uS3 family. As to quaternary structure, part of the 30S ribosomal subunit. Forms a tight complex with proteins S10 and S14.

In terms of biological role, binds the lower part of the 30S subunit head. Binds mRNA in the 70S ribosome, positioning it for translation. This chain is Small ribosomal subunit protein uS3, found in Thiobacillus denitrificans (strain ATCC 25259 / T1).